A 142-amino-acid chain; its full sequence is HTH-type transcriptional regulator MntR (142 aa).

An HTH dtxR-type domain is found at 1-63; sequence MPTPSMEDYI…YEKYRGLVLT (63 aa). Mn(2+)-binding residues include D8, E11, H77, E99, E102, and H103.

The protein belongs to the DtxR/MntR family. As to quaternary structure, homodimer.

It localises to the cytoplasm. With respect to regulation, DNA binding is strongly activated by Mn(2+). Functionally, central regulator of manganese homeostasis. This is HTH-type transcriptional regulator MntR from Bacillus cereus (strain G9842).